We begin with the raw amino-acid sequence, 141 residues long: Hemoglobin subunit alpha-D (141 aa).

Residues 1 to 141 (VLTGEDKKHV…VAAVLAEKYR (141 aa)) form the Globin domain. Histidine 58 and histidine 87 together coordinate heme b.

The protein belongs to the globin family. As to quaternary structure, heterotetramer of two alpha-D chains and two beta chains. Red blood cells.

Functionally, involved in oxygen transport from the lung to the various peripheral tissues. This chain is Hemoglobin subunit alpha-D (HBAD), found in Turdus merula (Common blackbird).